The chain runs to 90 residues: U7-theraphotoxin-Hhn1j (90 aa).

The first 19 residues, 1–19, serve as a signal peptide directing secretion; the sequence is MKTAIFTVVLALAVFAVLS. A propeptide spanning residues 20–50 is cleaved from the precursor; sequence FGWEANEKALSEEFTELIHEKEAASETEARE. 3 disulfide bridges follow: Cys51–Cys65, Cys58–Cys70, and Cys64–Cys81.

The protein belongs to the neurotoxin 10 (Hwtx-1) family. 13 (Hntx-13) subfamily. Expressed by the venom gland.

The protein localises to the secreted. Functionally, ion channel inhibitor. This chain is U7-theraphotoxin-Hhn1j, found in Cyriopagopus hainanus (Chinese bird spider).